A 118-amino-acid chain; its full sequence is Large ribosomal subunit protein bL20 (118 aa).

The protein belongs to the bacterial ribosomal protein bL20 family.

In terms of biological role, binds directly to 23S ribosomal RNA and is necessary for the in vitro assembly process of the 50S ribosomal subunit. It is not involved in the protein synthesizing functions of that subunit. The polypeptide is Large ribosomal subunit protein bL20 (Pseudomonas aeruginosa (strain LESB58)).